The following is a 984-amino-acid chain: Putative formate dehydrogenase SA2102 (984 aa).

One can recognise a 2Fe-2S ferredoxin-type domain in the interval 3 to 79 (EHLVVTLDGK…PMTVNTVNND (77 aa)). Cys37, Cys48, Cys51, and Cys63 together coordinate [2Fe-2S] cluster. Positions 79–119 (DVKDAQKEALDRILEKHMLYCTVCDYNNGDCEIHNTMDAWG) constitute a 4Fe-4S His(Cys)3-ligated-type domain. Residues His95, Cys99, Cys102, Cys109, Cys147, Cys150, Cys153, Cys157, Cys190, Cys193, Cys196, Cys200, Cys264, Cys267, Cys271, and Cys299 each coordinate [4Fe-4S] cluster. 4Fe-4S ferredoxin-type domains are found at residues 138–165 (PFYRYDPNQCILCGRCVEACQDIEVNET) and 181–211 (NDVPINESSCVSCGQCATVCPCNAMMEVNME). The tract at residues 252 to 984 (MRKERIKKTK…YVFPGNQVDK (733 aa)) is formate dehydrogenase. Residues 257–313 (IKKTKTVCTYCGVGCSFEVWTKDREILKVQPSHDSPANKIATCVKGKFSWGHINSDQ) enclose the 4Fe-4S Mo/W bis-MGD-type domain.

In the C-terminal section; belongs to the prokaryotic molybdopterin-containing oxidoreductase family. Requires [2Fe-2S] cluster as cofactor. [4Fe-4S] cluster is required as a cofactor. Mo-bis(molybdopterin guanine dinucleotide) serves as cofactor.

It carries out the reaction formate + NAD(+) = CO2 + NADH. This chain is Putative formate dehydrogenase SA2102, found in Staphylococcus aureus (strain N315).